Reading from the N-terminus, the 247-residue chain is ATP synthase subunit a (247 aa).

Helical transmembrane passes span I26 to V46, Y85 to L105, I115 to F135, F141 to I161, F178 to V198, and I205 to I225.

The protein belongs to the ATPase A chain family. As to quaternary structure, F-type ATPases have 2 components, CF(1) - the catalytic core - and CF(0) - the membrane proton channel. CF(1) has five subunits: alpha(3), beta(3), gamma(1), delta(1), epsilon(1). CF(0) has three main subunits: a, b and c.

Its subcellular location is the mitochondrion inner membrane. Functionally, mitochondrial membrane ATP synthase (F(1)F(0) ATP synthase or Complex V) produces ATP from ADP in the presence of a proton gradient across the membrane which is generated by electron transport complexes of the respiratory chain. F-type ATPases consist of two structural domains, F(1) - containing the extramembraneous catalytic core and F(0) - containing the membrane proton channel, linked together by a central stalk and a peripheral stalk. During catalysis, ATP synthesis in the catalytic domain of F(1) is coupled via a rotary mechanism of the central stalk subunits to proton translocation. Key component of the proton channel; it may play a direct role in the translocation of protons across the membrane. The polypeptide is ATP synthase subunit a (ATP6) (Acanthamoeba castellanii (Amoeba)).